We begin with the raw amino-acid sequence, 151 residues long: uncharacterized protein (151 aa).

It to B.subtilis pcf and to sigma factors.

This is an uncharacterized protein from Bacillus subtilis (strain 168).